Here is a 492-residue protein sequence, read N- to C-terminus: Cytochrome P450 monooxygenase MYCFIDRAFT_204672 (492 aa).

N-linked (GlcNAc...) asparagine glycosylation is present at Asn116. Residues 269–293 (FLISMIFISAANGCVVSGAMLYSIA) traverse the membrane as a helical segment. The N-linked (GlcNAc...) asparagine glycan is linked to Asn335. Cys430 is a heme binding site.

The protein belongs to the cytochrome P450 family. The cofactor is heme.

The protein localises to the membrane. The protein operates within secondary metabolite biosynthesis. Its function is as follows. Cytochrome P450 monooxygenase; part of the gene cluster that mediates the biosynthesis of an emodin derivative that may be involved in black Sigatoka disease of banana. The pathway begins with the synthesis of atrochrysone thioester by the polyketide synthase PKS8-1. The atrochrysone carboxyl ACP thioesterase MYCFIDRAFT_190111 then breaks the thioester bond and releases the atrochrysone carboxylic acid from PKS8-1. The decarboxylase MYCFIDRAFT_34057 then catalyzes the concerted decarboxylation-elimination required to convert atochrysone carboxylic acid into emodin anthrone, which is further oxidized to emodin by the anthrone oxygenase MYCFIDRAFT_34418. The functions of the other tailoring enzymes as well as the final product of the cluster have still to be identified. The sequence is that of Cytochrome P450 monooxygenase MYCFIDRAFT_204672 from Pseudocercospora fijiensis (strain CIRAD86) (Black leaf streak disease fungus).